A 250-amino-acid polypeptide reads, in one-letter code: MVDPISNAAPPMPADSSERLDPPGFAEAPHYHGHRERLRERFREAGAAALSDYELLELVLFRALPRRDVKPLAKALIARFGSFAETMQAPEPRLREVSGLGEAAITEIKLVAAAAARVTKGQVKSRTVLSSWSAVIDYCRTTMAFADREQFRILFLDKRNQLIADELQQVGTVDHTPVYPREIVKRALELSATAVIMVHNHPSGDPTPSQADIQMTKTIVAIAEPLGVAVHDHIIVGKNGHASLKGLKLF.

A disordered region spans residues 1 to 27 (MVDPISNAAPPMPADSSERLDPPGFAE). Residues 128 to 250 (VLSSWSAVID…HASLKGLKLF (123 aa)) form the MPN domain. Residues His199, His201, and Asp212 each coordinate Zn(2+). The JAMM motif signature appears at 199 to 212 (HNHPSGDPTPSQAD).

This sequence belongs to the UPF0758 family.

The sequence is that of UPF0758 protein RPB_0700 from Rhodopseudomonas palustris (strain HaA2).